We begin with the raw amino-acid sequence, 88 residues long: Small ribosomal subunit protein uS15 (88 aa).

It belongs to the universal ribosomal protein uS15 family. As to quaternary structure, part of the 30S ribosomal subunit. Forms a bridge to the 50S subunit in the 70S ribosome, contacting the 23S rRNA.

Its function is as follows. One of the primary rRNA binding proteins, it binds directly to 16S rRNA where it helps nucleate assembly of the platform of the 30S subunit by binding and bridging several RNA helices of the 16S rRNA. Forms an intersubunit bridge (bridge B4) with the 23S rRNA of the 50S subunit in the ribosome. In Mycoplasma capricolum subsp. capricolum (strain California kid / ATCC 27343 / NCTC 10154), this protein is Small ribosomal subunit protein uS15.